Consider the following 258-residue polypeptide: Transcription initiation factor TFIID subunit 9B (258 aa).

At methionine 1 the chain carries N-acetylmethionine. Phosphoserine is present on serine 147. Residues threonine 159 and threonine 174 each carry the phosphothreonine modification. Serine 177 carries the post-translational modification Phosphoserine. Polar residues predominate over residues 227–236 (SSQSTATDSN). A disordered region spans residues 227–258 (SSQSTATDSNPLKRKHDDDDDDDDDDDDNDTM). A compositionally biased stretch (acidic residues) spans 244–258 (DDDDDDDDDDDNDTM).

Belongs to the TAF9 family. In terms of assembly, binds TAF5 and TAF6. Component of TFIID and the TATA-binding protein-free TAF complex (TFTC). TFIID is composed of TATA binding protein (TBP) and a number of TBP-associated factors (TAFs). Binds N-terminal domain of p53/TP53 which is essential for transcription.

The protein resides in the nucleus. Essential for cell viability. TAF9 and TAF9L are involved in transcriptional activation as well as repression of distinct but overlapping sets of genes. May have a role in gene regulation associated with apoptosis. TAFs are components of the transcription factor IID (TFIID) complex, the TBP-free TAFII complex (TFTC), the PCAF histone acetylase complex and the STAGA transcription coactivator-HAT complex. TFIID or TFTC are essential for the regulation of RNA polymerase II-mediated transcription. The sequence is that of Transcription initiation factor TFIID subunit 9B (Taf9b) from Rattus norvegicus (Rat).